We begin with the raw amino-acid sequence, 219 residues long: 2-hydroxy-3-keto-5-methylthiopentenyl-1-phosphate phosphatase (219 aa).

The protein belongs to the HAD-like hydrolase superfamily. MtnX family.

It catalyses the reaction 2-hydroxy-5-methylsulfanyl-3-oxopent-1-enyl phosphate + H2O = 1,2-dihydroxy-5-(methylsulfanyl)pent-1-en-3-one + phosphate. It participates in amino-acid biosynthesis; L-methionine biosynthesis via salvage pathway; L-methionine from S-methyl-5-thio-alpha-D-ribose 1-phosphate: step 4/6. Functionally, dephosphorylates 2-hydroxy-3-keto-5-methylthiopentenyl-1-phosphate (HK-MTPenyl-1-P) yielding 1,2-dihydroxy-3-keto-5-methylthiopentene (DHK-MTPene). The polypeptide is 2-hydroxy-3-keto-5-methylthiopentenyl-1-phosphate phosphatase (Bacillus cereus (strain 03BB102)).